A 365-amino-acid polypeptide reads, in one-letter code: Sulfotransferase 2B1 (365 aa).

70–75 (KSGTTW) contacts 3'-phosphoadenylyl sulfate. Substrate-binding residues include tryptophan 98, tryptophan 103, and histidine 125. Residue histidine 125 is the Proton acceptor of the active site. 3'-phosphoadenylyl sulfate contacts are provided by residues arginine 147, serine 155, tyrosine 210, 244-249 (STFSAM), and 274-276 (RKG). The tract at residues 303–365 (GMPTFPWDED…ASETPHPRPS (63 aa)) is disordered. The span at 309 to 325 (WDEDPEEDGSPDPEPSP) shows a compositional bias: acidic residues. Serine 348 is subject to Phosphoserine.

The protein belongs to the sulfotransferase 1 family. In terms of processing, phosphorylated. Expressed in the stratum granulosum-stratum corneum junction in the skin (at protein level). Expressed highly in placenta, prostate and trachea and lower expression in the small intestine and lung.

It is found in the cytoplasm. The protein localises to the cytosol. Its subcellular location is the microsome. It localises to the nucleus. The catalysed reaction is an alcohol + 3'-phosphoadenylyl sulfate = an alkyl sulfate + adenosine 3',5'-bisphosphate + H(+). It carries out the reaction 3beta-hydroxyandrost-5-en-17-one + 3'-phosphoadenylyl sulfate = dehydroepiandrosterone 3-sulfate + adenosine 3',5'-bisphosphate + H(+). It catalyses the reaction (24S)-hydroxycholesterol + 3'-phosphoadenylyl sulfate = (24S)-hydroxycholesterol 3-sulfate + adenosine 3',5'-bisphosphate + H(+). The enzyme catalyses cholesterol + 3'-phosphoadenylyl sulfate = cholesterol sulfate + adenosine 3',5'-bisphosphate + H(+). The catalysed reaction is pregnenolone + 3'-phosphoadenylyl sulfate = pregnenolone sulfate + adenosine 3',5'-bisphosphate + H(+). Its function is as follows. Sulfotransferase that utilizes 3'-phospho-5'-adenylyl sulfate (PAPS) as sulfonate donor to catalyze the sulfate conjugation. Responsible for the sulfation of cholesterol. Catalyzes sulfation of the 3beta-hydroxyl groups of steroids, such as, pregnenolone and dehydroepiandrosterone (DHEA). Preferentially sulfonates cholesterol, while it also has significant activity with pregnenolone and DHEA. Plays a role in epidermal cholesterol metabolism and in the regulation of epidermal proliferation and differentiation. Functionally, sulfonates pregnenolone but not cholesterol. This chain is Sulfotransferase 2B1 (SULT2B1), found in Homo sapiens (Human).